The sequence spans 193 residues: Protein SPEAR3 (193 aa).

2 disordered regions span residues 1–50 (MGSS…GVAQ) and 85–104 (GYPSIPSSSPSFSYASSSPP). The span at 14-26 (SSSSSPTSSSSSP) shows a compositional bias: low complexity. Residues 44 to 52 (RGLGVAQLE) carry the SPL motif. Positions 86 to 101 (YPSIPSSSPSFSYASS) are enriched in low complexity. Positions 187–193 (LDLELRL) match the EAR motif.

As to quaternary structure, interacts with TPL and the TPR corepressors TPR1, TPR2, TPR3, TPR4, and with the TCP transcription factors TCP2, TCP3, TCP4, TCP5, TCP10, TCP13, TCP17 and TCP24. Interacts with SPL and SPEAR2. Expressed in shoot apical meristem, cotyledons and leaves. Detected at the leaf margins and in the vascular bundles at the base of the leaves.

The protein resides in the nucleus. Its function is as follows. Transcriptional regulator of leaf development. Acts as an adapter-like transcriptional repressor recruiting TPL/TPR corepressors to inhibit the CIN-like TCP transcription factors. The protein is Protein SPEAR3 of Arabidopsis thaliana (Mouse-ear cress).